The chain runs to 311 residues: Ornithine carbamoyltransferase (311 aa).

Carbamoyl phosphate is bound by residues 54–57 (STRT), Q81, R105, and 132–135 (HPCQ). L-ornithine-binding positions include N164, D228, and 232–233 (SM). Residues 268–269 (CL) and R296 contribute to the carbamoyl phosphate site.

Belongs to the aspartate/ornithine carbamoyltransferase superfamily. OTCase family.

It localises to the cytoplasm. The catalysed reaction is carbamoyl phosphate + L-ornithine = L-citrulline + phosphate + H(+). It functions in the pathway amino-acid biosynthesis; L-arginine biosynthesis; L-arginine from L-ornithine and carbamoyl phosphate: step 1/3. In terms of biological role, reversibly catalyzes the transfer of the carbamoyl group from carbamoyl phosphate (CP) to the N(epsilon) atom of ornithine (ORN) to produce L-citrulline. The chain is Ornithine carbamoyltransferase from Renibacterium salmoninarum (strain ATCC 33209 / DSM 20767 / JCM 11484 / NBRC 15589 / NCIMB 2235).